Consider the following 433-residue polypeptide: Divergent protein kinase domain 2B (433 aa).

An N-terminal signal peptide occupies residues 1–29; the sequence is MEPRLGPKAAALHLGWPFLLLWVSGLSYS. Asn100 is a glycosylation site (N-linked (GlcNAc...) asparagine).

This sequence belongs to the DIPK family.

It is found in the secreted. This is Divergent protein kinase domain 2B (DIPK2B) from Bos taurus (Bovine).